The following is a 174-amino-acid chain: RNA pyrophosphohydrolase (174 aa).

Residues 6-145 (GYRPNVGMII…KRRVYWQALQ (140 aa)) enclose the Nudix hydrolase domain. The short motif at 38–59 (GGIDYAETPEQAMFRELEEEVG) is the Nudix box element.

This sequence belongs to the Nudix hydrolase family. RppH subfamily. A divalent metal cation is required as a cofactor.

Its function is as follows. Accelerates the degradation of transcripts by removing pyrophosphate from the 5'-end of triphosphorylated RNA, leading to a more labile monophosphorylated state that can stimulate subsequent ribonuclease cleavage. This Acidithiobacillus ferrooxidans (strain ATCC 53993 / BNL-5-31) (Leptospirillum ferrooxidans (ATCC 53993)) protein is RNA pyrophosphohydrolase.